Consider the following 360-residue polypeptide: Protein Wnt-5b (360 aa).

The signal sequence occupies residues 1-16; that stretch reads MTPILRLLLLSSLLSC. The cysteines at positions 84 and 95 are disulfide-linked. 2 N-linked (GlcNAc...) asparagine glycosylation sites follow: asparagine 94 and asparagine 100. Disulfide bonds link cysteine 134–cysteine 142, cysteine 144–cysteine 162, cysteine 218–cysteine 232, cysteine 220–cysteine 227, cysteine 289–cysteine 320, cysteine 305–cysteine 315, cysteine 319–cysteine 359, cysteine 335–cysteine 350, cysteine 337–cysteine 347, and cysteine 342–cysteine 343. Serine 224 is lipidated: O-palmitoleoyl serine; by PORCN. 2 N-linked (GlcNAc...) asparagine glycosylation sites follow: asparagine 292 and asparagine 306.

This sequence belongs to the Wnt family. In terms of processing, palmitoleoylation is required for efficient binding to frizzled receptors. Depalmitoleoylation leads to Wnt signaling pathway inhibition.

It localises to the secreted. It is found in the extracellular space. The protein resides in the extracellular matrix. Ligand for members of the frizzled family of seven transmembrane receptors. Probable developmental protein. May be a signaling molecule which affects the development of discrete regions of tissues. Is likely to signal over only few cell diameters. The sequence is that of Protein Wnt-5b (wnt5b) from Xenopus laevis (African clawed frog).